The primary structure comprises 312 residues: Malate dehydrogenase (312 aa).

NAD(+)-binding positions include 12–17 (GAGFTG) and Asp36. The substrate site is built by Arg87 and Arg93. Residues Asn100 and 123–125 (LTN) each bind NAD(+). Asn125 serves as a coordination point for substrate. Ser149 is subject to Phosphoserine. A substrate-binding site is contributed by Arg156. His180 serves as the catalytic Proton acceptor.

This sequence belongs to the LDH/MDH superfamily. MDH type 3 family.

The enzyme catalyses (S)-malate + NAD(+) = oxaloacetate + NADH + H(+). Catalyzes the reversible oxidation of malate to oxaloacetate. The sequence is that of Malate dehydrogenase from Bacillus cytotoxicus (strain DSM 22905 / CIP 110041 / 391-98 / NVH 391-98).